Consider the following 573-residue polypeptide: 3-(3-hydroxy-phenyl)propionate/3-hydroxycinnamic acid hydroxylase (573 aa).

Residues 18-47 (DVVI…IVEE) and 283-293 (FRKGRMFLAGD) each bind FAD.

Belongs to the PheA/TfdB FAD monooxygenase family. FAD serves as cofactor.

The enzyme catalyses 3-(3-hydroxyphenyl)propanoate + NADH + O2 + H(+) = 3-(2,3-dihydroxyphenyl)propanoate + NAD(+) + H2O. It carries out the reaction (2E)-3-(3-hydroxyphenyl)prop-2-enoate + NADH + O2 + H(+) = (2E)-3-(2,3-dihydroxyphenyl)prop-2-enoate + NAD(+) + H2O. It functions in the pathway aromatic compound metabolism; 3-phenylpropanoate degradation. In terms of biological role, catalyzes the insertion of one atom of molecular oxygen into position 2 of the phenyl ring of 3-(3-hydroxyphenyl)propionate (3-HPP) and hydroxycinnamic acid (3HCI). This Mycobacterium sp. (strain KMS) protein is 3-(3-hydroxy-phenyl)propionate/3-hydroxycinnamic acid hydroxylase.